We begin with the raw amino-acid sequence, 62 residues long: Conotoxin TxIC (62 aa).

Residues 1 to 22 (MHCLPIFVILLLLTASGPSVDA) form the signal peptide. Residues 23-47 (QLKTKDDVPLSSFRDHAKSTLRRLQ) constitute a propeptide that is removed on maturation. Cystine bridges form between Cys52–Cys58 and Cys53–Cys61. Position 60 is a 4-hydroxyproline (Pro60). Cysteine amide is present on Cys61.

It belongs to the conotoxin A superfamily. In terms of tissue distribution, expressed by the venom duct.

The protein resides in the secreted. The chain is Conotoxin TxIC from Conus textile (Cloth-of-gold cone).